The chain runs to 1140 residues: Eukaryotic translation initiation factor 3 subunit A (1140 aa).

Residues 319 to 501 (LQRMAAHVLL…NSIYFGTDLT (183 aa)) form the PCI domain. Composition is skewed to basic and acidic residues over residues 588–623 (QNNA…EERE) and 829–899 (AAEE…RGGD). Disordered regions lie at residues 588 to 630 (QNNA…HQNE) and 829 to 1140 (AAEE…VKRR). Position 908 is a phosphoserine (S908). Basic and acidic residues-rich tracts occupy residues 920-976 (ERND…EPDS), 990-1051 (SRDD…EPQR), 1059-1086 (DAPR…RGDQ), and 1109-1130 (TREE…KAGD).

The protein belongs to the eIF-3 subunit A family. As to quaternary structure, component of the eukaryotic translation initiation factor 3 (eIF-3) complex. The eIF-3 complex interacts with pix.

Its subcellular location is the cytoplasm. Its function is as follows. RNA-binding component of the eukaryotic translation initiation factor 3 (eIF-3) complex, which is involved in protein synthesis of a specialized repertoire of mRNAs and, together with other initiation factors, stimulates binding of mRNA and methionyl-tRNAi to the 40S ribosome. The eIF-3 complex specifically targets and initiates translation of a subset of mRNAs involved in cell proliferation. This is Eukaryotic translation initiation factor 3 subunit A from Drosophila melanogaster (Fruit fly).